Here is a 399-residue protein sequence, read N- to C-terminus: Phosphoglycerate kinase (399 aa).

Substrate-binding positions include 22 to 24 (DFN), R38, 61 to 64 (HLGR), R120, and R153. Residues K204, E326, and 352–355 (GGDT) each bind ATP.

It belongs to the phosphoglycerate kinase family. Monomer.

Its subcellular location is the cytoplasm. It carries out the reaction (2R)-3-phosphoglycerate + ATP = (2R)-3-phospho-glyceroyl phosphate + ADP. It functions in the pathway carbohydrate degradation; glycolysis; pyruvate from D-glyceraldehyde 3-phosphate: step 2/5. The protein is Phosphoglycerate kinase of Geotalea uraniireducens (strain Rf4) (Geobacter uraniireducens).